Reading from the N-terminus, the 403-residue chain is Mitochondrial intermembrane space import and assembly protein 40 (403 aa).

A mitochondrion-targeting transit peptide spans 1-31 (MLRNLVVRNACRNRPSIQVARGLCRHQTRRL). Residues 33-46 (ASSPQFGRNSNQEK) are Mitochondrial matrix-facing. The helical; Signal-anchor for type II membrane protein transmembrane segment at 47–66 (TAGFIMGILSMAGALYFIAP) threads the bilayer. Topologically, residues 67-403 (NRKPLFASRK…KEPLNEESKP (337 aa)) are mitochondrial intermembrane. 5 stretches are compositionally biased toward basic and acidic residues: residues 75-84 (RKVESDKTAE), 101-118 (NNSK…KNDE), 147-168 (EDNK…KDDE), 206-230 (SEKK…KTTT), and 262-271 (EELRKQEEKQ). Positions 75–292 (RKVESDKTAE…GAYNPDTGEI (218 aa)) are disordered. 3 disulfides stabilise this stretch: Cys-296–Cys-298, Cys-307–Cys-340, and Cys-317–Cys-330. In terms of domain architecture, CHCH spans 304 to 348 (HGPCGEEFKSAFSCFVYSEAEPKGIDCVEKFQHMQDCFRKYPEHY). Short sequence motifs (cx9C motif) lie at residues 307–317 (CGEEFKSAFSC) and 330–340 (CVEKFQHMQDC). A disordered region spans residues 351-403 (QLKETSDDEEPQDKVKVNTIESAPNVSSAKENAAKKAEQSDVKKEPLNEESKP). Positions 369–378 (TIESAPNVSS) are enriched in polar residues. The segment covering 382–403 (NAAKKAEQSDVKKEPLNEESKP) has biased composition (basic and acidic residues).

In terms of assembly, monomer. Interacts with the FAD-linked sulfhydryl oxidase ERV1 and with the substrate proteins COX17, TIM9, and TIM13, forming transient intermolecular disulfide bridges. Interacts with FCJ1. The cofactor is Cu(2+). Zn(2+) is required as a cofactor.

It localises to the mitochondrion inner membrane. Functionally, required for the import and folding of small cysteine-containing proteins (small Tim) in the mitochondrial intermembrane space (IMS). Forms a redox cycle with ERV1 that involves a disulfide relay system. Precursor proteins to be imported into the IMS are translocated in their reduced form into the mitochondria. The oxidized form of MIA40 forms a transient intermolecular disulfide bridge with the reduced precursor protein, resulting in oxidation of the precursor protein that now contains an intramolecular disulfide bond and is able to undergo folding in the IMS. Reduced MIA40 is reoxidized by FAD-linked sulfhydryl oxidase ERV1. The protein is Mitochondrial intermembrane space import and assembly protein 40 (MIA40) of Saccharomyces cerevisiae (strain ATCC 204508 / S288c) (Baker's yeast).